The primary structure comprises 249 residues: DNA polymerase sliding clamp (249 aa).

Belongs to the PCNA family. As to quaternary structure, homotrimer. The subunits circularize to form a toroid; DNA passes through its center. Replication factor C (RFC) is required to load the toroid on the DNA.

In terms of biological role, sliding clamp subunit that acts as a moving platform for DNA processing. Responsible for tethering the catalytic subunit of DNA polymerase and other proteins to DNA during high-speed replication. The polypeptide is DNA polymerase sliding clamp (Nanoarchaeum equitans (strain Kin4-M)).